We begin with the raw amino-acid sequence, 245 residues long: Tryptophan synthase alpha chain (245 aa).

Active-site proton acceptor residues include E35 and D46.

It belongs to the TrpA family. As to quaternary structure, tetramer of two alpha and two beta chains.

It carries out the reaction (1S,2R)-1-C-(indol-3-yl)glycerol 3-phosphate + L-serine = D-glyceraldehyde 3-phosphate + L-tryptophan + H2O. The protein operates within amino-acid biosynthesis; L-tryptophan biosynthesis; L-tryptophan from chorismate: step 5/5. The alpha subunit is responsible for the aldol cleavage of indoleglycerol phosphate to indole and glyceraldehyde 3-phosphate. This chain is Tryptophan synthase alpha chain, found in Sulfurisphaera tokodaii (strain DSM 16993 / JCM 10545 / NBRC 100140 / 7) (Sulfolobus tokodaii).